The sequence spans 346 residues: Hydroxycarboxylic acid receptor 1 (346 aa).

The Extracellular segment spans residues methionine 1 to leucine 21. Asparagine 3 carries N-linked (GlcNAc...) asparagine glycosylation. The helical transmembrane segment at leucine 22 to phenylalanine 42 threads the bilayer. Topologically, residues histidine 43–proline 49 are cytoplasmic. The helical transmembrane segment at serine 50 to phenylalanine 70 threads the bilayer. The Extracellular portion of the chain corresponds to arginine 71 to arginine 89. Cysteine 88 and cysteine 165 are oxidised to a cystine. A helical membrane pass occupies residues valine 90–alanine 110. Residues alanine 111–arginine 130 lie on the Cytoplasmic side of the membrane. A helical membrane pass occupies residues valine 131–leucine 151. The Extracellular portion of the chain corresponds to leucine 152–glutamine 182. The helical transmembrane segment at leucine 183 to leucine 203 threads the bilayer. Residues arginine 204–arginine 220 are Cytoplasmic-facing. Residues phenylalanine 221–leucine 241 form a helical membrane-spanning segment. Topologically, residues tyrosine 242 to histidine 261 are extracellular. The chain crosses the membrane as a helical span at residues isoleucine 262–serine 281. The Cytoplasmic portion of the chain corresponds to serine 282–histidine 346.

This sequence belongs to the G-protein coupled receptor 1 family. Expressed abundantly in brown and white fat. It also detectable at lower levels in liver, kidney, skeletal muscle, brain and pituitary. Not detected in frontal, temporal and occipital lobes of the cortex, basal forebrain, caudate nucleus, nucleus accumbens and hippocampus.

Its subcellular location is the cell membrane. Its function is as follows. Acts as a receptor for L-lactate and mediates its anti-lipolytic effect through a G(i)-protein-mediated pathway. The sequence is that of Hydroxycarboxylic acid receptor 1 (HCAR1) from Homo sapiens (Human).